The sequence spans 87 residues: Small ribosomal subunit protein bS20 (87 aa).

The interval 1–25 is disordered; it reads MANSAQARKRARQNISHRNRNMSLR. A compositionally biased stretch (basic residues) spans 7–20; that stretch reads ARKRARQNISHRNR.

Belongs to the bacterial ribosomal protein bS20 family.

In terms of biological role, binds directly to 16S ribosomal RNA. In Nitrosospira multiformis (strain ATCC 25196 / NCIMB 11849 / C 71), this protein is Small ribosomal subunit protein bS20.